The following is a 550-amino-acid chain: MGARASVLSGGELDRWEKIRLRPGGKKQYRLKHIVWASRKLERFAVNPGLLETSKGCRQILGQLQPSLQTGSEELRSLYNTVATLYCVHQRIEVRDTKEALDKIEEEQNKSKKKAQQAAADTGNSSQVSQNYPIVQNLQGQMVHQAISPRTLNAWVKVIEEKAFSPEVIPMFAALSEGATPQDLNTMLNTVGGHQAAMQMLKETINEEAAEWDRLHPVHAGPIAPGQMREPRGSDIAGTTSTLQEQIGWMTNNPPTPVGEIYKRWIILGLNKIVRMYSPISILDIRQGPKEPFRDYVDRFYKTLRAEQASQEVKNWMTETLLVQNANPDCKTILKALGPAATLEEMMTACQGVGGPGHKARVLAEAMSQVTNSATIMMQRGNFRRQGKTVKCFNCGKEGHIARNCKAPRKKGCWKCGREGHQMKDCTERQANFLREDLAFPQGKAREFSSEQTRANSPTRGELQVWGRDNNSLSEAGAERQGTVSFSFPQITLWQRPIVTIKIGGQLKEALLDTGADDTVLEEINLPGRWKPKMIGGIGGFIKVRQYDEV.

Gly-2 is lipidated: N-myristoyl glycine; by host. The interval 7-31 (VLSGGELDRWEKIRLRPGGKKQYRL) is interaction with Gp41. The interaction with host CALM1 stretch occupies residues 8 to 43 (LSGGELDRWEKIRLRPGGKKQYRLKHIVWASRKLER). The interval 12–19 (ELDRWEKI) is interaction with host AP3D1. An interaction with membrane phosphatidylinositol 4,5-bisphosphate and RNA region spans residues 14-33 (DRWEKIRLRPGGKKQYRLKH). The short motif at 16–22 (WEKIRLR) is the Nuclear export signal element. A Nuclear localization signal motif is present at residues 26–32 (KKQYRLK). An interaction with membrane phosphatidylinositol 4,5-bisphosphate region spans residues 73–77 (EELRS). Positions 106–128 (EEQNKSKKKAQQAAADTGNSSQV) are disordered. A Phosphotyrosine; by host modification is found at Tyr-132. Positions 189 to 227 (NTVGGHQAAMQMLKETINEEAAEWDRLHPVHAGPIAPGQ) are interaction with human PPIA/CYPA and NUP153. The segment at 277-363 (YSPISILDIR…GGPGHKARVL (87 aa)) is dimerization/Multimerization of capsid protein p24. 2 CCHC-type zinc fingers span residues 390–407 (VKCFNCGKEGHIARNCKA) and 411–428 (KGCWKCGREGHQMKDCTE). A disordered region spans residues 444 to 464 (KAREFSSEQTRANSPTRGELQ). Residues 450–459 (SEQTRANSPT) are compositionally biased toward polar residues. The tract at residues 489 to 493 (PQITL) is dimerization of protease. The Peptidase A2 domain occupies 508–550 (KEALLDTGADDTVLEEINLPGRWKPKMIGGIGGFIKVRQYDEV). The For protease activity; shared with dimeric partner role is filled by Asp-513. The segment at 537 to 543 (GIGGFIK) is dimerization of protease.

Homotrimer; further assembles as hexamers of trimers. Interacts with gp41 (via C-terminus). Interacts with host CALM1; this interaction induces a conformational change in the Matrix protein, triggering exposure of the myristate group. Interacts with host AP3D1; this interaction allows the polyprotein trafficking to multivesicular bodies during virus assembly. Part of the pre-integration complex (PIC) which is composed of viral genome, matrix protein, Vpr and integrase. As to quaternary structure, homodimer; the homodimer further multimerizes as homohexamers or homopentamers. Interacts with human PPIA/CYPA; This interaction stabilizes the capsid. Interacts with human NUP153. Interacts with host PDZD8; this interaction stabilizes the capsid. Interacts with monkey TRIM5; this interaction destabilizes the capsid. In terms of assembly, homodimer, whose active site consists of two apposed aspartic acid residues. Specific enzymatic cleavages by the viral protease yield mature proteins. The protease is released by autocatalytic cleavage. The polyprotein is cleaved during and after budding, this process is termed maturation. Proteolytic cleavage of p66 RT removes the RNase H domain to yield the p51 RT subunit. Nucleocapsid protein p7 might be further cleaved after virus entry. In terms of processing, tyrosine phosphorylated presumably in the virion by a host kinase. Phosphorylation is apparently not a major regulator of membrane association. Post-translationally, phosphorylated possibly by host MAPK1; this phosphorylation is necessary for Pin1-mediated virion uncoating. Methylated by host PRMT6, impairing its function by reducing RNA annealing and the initiation of reverse transcription.

The protein localises to the host cell membrane. It localises to the host endosome. The protein resides in the host multivesicular body. Its subcellular location is the virion membrane. It is found in the host nucleus. The protein localises to the host cytoplasm. It localises to the virion. It carries out the reaction Specific for a P1 residue that is hydrophobic, and P1' variable, but often Pro.. With respect to regulation, the viral protease is inhibited by many synthetic protease inhibitors (PIs), such as amprenavir, atazanavir, indinavir, loprinavir, nelfinavir, ritonavir and saquinavir. Use of protease inhibitors in tritherapy regimens permit more ambitious therapeutic strategies. In terms of biological role, mediates, with Gag polyprotein, the essential events in virion assembly, including binding the plasma membrane, making the protein-protein interactions necessary to create spherical particles, recruiting the viral Env proteins, and packaging the genomic RNA via direct interactions with the RNA packaging sequence (Psi). Gag-Pol polyprotein may regulate its own translation, by the binding genomic RNA in the 5'-UTR. At low concentration, the polyprotein would promote translation, whereas at high concentration, the polyprotein would encapsidate genomic RNA and then shut off translation. Its function is as follows. Targets the polyprotein to the plasma membrane via a multipartite membrane-binding signal, that includes its myristoylated N-terminus. Matrix protein is part of the pre-integration complex. Implicated in the release from host cell mediated by Vpu. Binds to RNA. Functionally, forms the conical core that encapsulates the genomic RNA-nucleocapsid complex in the virion. Most core are conical, with only 7% tubular. The core is constituted by capsid protein hexamer subunits. The core is disassembled soon after virion entry. Host restriction factors such as TRIM5-alpha or TRIMCyp bind retroviral capsids and cause premature capsid disassembly, leading to blocks in reverse transcription. Capsid restriction by TRIM5 is one of the factors which restricts HIV-1 to the human species. Host PIN1 apparently facilitates the virion uncoating. On the other hand, interactions with PDZD8 or CYPA stabilize the capsid. Encapsulates and protects viral dimeric unspliced genomic RNA (gRNA). Binds these RNAs through its zinc fingers. Acts as a nucleic acid chaperone which is involved in rearangement of nucleic acid secondary structure during gRNA retrotranscription. Also facilitates template switch leading to recombination. As part of the polyprotein, participates in gRNA dimerization, packaging, tRNA incorporation and virion assembly. In terms of biological role, aspartyl protease that mediates proteolytic cleavages of Gag and Gag-Pol polyproteins during or shortly after the release of the virion from the plasma membrane. Cleavages take place as an ordered, step-wise cascade to yield mature proteins. This process is called maturation. Displays maximal activity during the budding process just prior to particle release from the cell. Also cleaves Nef and Vif, probably concomitantly with viral structural proteins on maturation of virus particles. Hydrolyzes host EIF4GI and PABP1 in order to shut off the capped cellular mRNA translation. The resulting inhibition of cellular protein synthesis serves to ensure maximal viral gene expression and to evade host immune response. Also mediates cleavage of host YTHDF3. Mediates cleavage of host CARD8, thereby activating the CARD8 inflammasome, leading to the clearance of latent HIV-1 in patient CD4(+) T-cells after viral reactivation; in contrast, HIV-1 can evade CARD8-sensing when its protease remains inactive in infected cells prior to viral budding. The sequence is that of Gag-Pol polyprotein (gag-pol) from Human immunodeficiency virus type 1 group M subtype B (isolate CDC-451) (HIV-1).